A 114-amino-acid polypeptide reads, in one-letter code: MVVGIGIDVVQLKRFLTLVETSDCFAKRLLTSNELNSYWKLNNNQRANFLAVHWTLKEAIYKATSHIKPLFTKLEIYKLNNQYRCEFIQNINLLLSVSYTNCHVSAICLAQQNG.

Positions 8 and 58 each coordinate Mg(2+).

This sequence belongs to the P-Pant transferase superfamily. AcpS family. The cofactor is Mg(2+).

It localises to the cytoplasm. The enzyme catalyses apo-[ACP] + CoA = holo-[ACP] + adenosine 3',5'-bisphosphate + H(+). Transfers the 4'-phosphopantetheine moiety from coenzyme A to a Ser of acyl-carrier-protein. The protein is Holo-[acyl-carrier-protein] synthase of Mycoplasma genitalium (strain ATCC 33530 / DSM 19775 / NCTC 10195 / G37) (Mycoplasmoides genitalium).